We begin with the raw amino-acid sequence, 114 residues long: T cell receptor beta variable 3-1 (114 aa).

Positions 1–21 (MGCRLLCCVVFCLLQAGPLDT) are cleaved as a signal peptide. Positions 22–114 (AVSQTPKYLV…SAVYFCASSQ (93 aa)) constitute an Ig-like domain. A disulfide bridge links Cys42 with Cys110. Asn76 carries N-linked (GlcNAc...) asparagine glycosylation.

As to quaternary structure, alpha-beta TR is a heterodimer composed of an alpha and beta chain; disulfide-linked. The alpha-beta TR is associated with the transmembrane signaling CD3 coreceptor proteins to form the TR-CD3 (TcR or TCR). The assembly of alpha-beta TR heterodimers with CD3 occurs in the endoplasmic reticulum where a single alpha-beta TR heterodimer associates with one CD3D-CD3E heterodimer, one CD3G-CD3E heterodimer and one CD247 homodimer forming a stable octameric structure. CD3D-CD3E and CD3G-CD3E heterodimers preferentially associate with TR alpha and TR beta chains, respectively. The association of the CD247 homodimer is the last step of TcR assembly in the endoplasmic reticulum and is required for transport to the cell surface.

It localises to the cell membrane. Functionally, v region of the variable domain of T cell receptor (TR) beta chain that participates in the antigen recognition. Alpha-beta T cell receptors are antigen specific receptors which are essential to the immune response and are present on the cell surface of T lymphocytes. Recognize peptide-major histocompatibility (MH) (pMH) complexes that are displayed by antigen presenting cells (APC), a prerequisite for efficient T cell adaptive immunity against pathogens. Binding of alpha-beta TR to pMH complex initiates TR-CD3 clustering on the cell surface and intracellular activation of LCK that phosphorylates the ITAM motifs of CD3G, CD3D, CD3E and CD247 enabling the recruitment of ZAP70. In turn ZAP70 phosphorylates LAT, which recruits numerous signaling molecules to form the LAT signalosome. The LAT signalosome propagates signal branching to three major signaling pathways, the calcium, the mitogen-activated protein kinase (MAPK) kinase and the nuclear factor NF-kappa-B (NF-kB) pathways, leading to the mobilization of transcription factors that are critical for gene expression and essential for T cell growth and differentiation. The T cell repertoire is generated in the thymus, by V-(D)-J rearrangement. This repertoire is then shaped by intrathymic selection events to generate a peripheral T cell pool of self-MH restricted, non-autoaggressive T cells. Post-thymic interaction of alpha-beta TR with the pMH complexes shapes TR structural and functional avidity. This Homo sapiens (Human) protein is T cell receptor beta variable 3-1.